A 320-amino-acid chain; its full sequence is Lipoyl synthase (320 aa).

[4Fe-4S] cluster-binding residues include cysteine 67, cysteine 72, cysteine 78, cysteine 93, cysteine 97, cysteine 100, and serine 307. The Radical SAM core domain maps to phenylalanine 79–threonine 296.

The protein belongs to the radical SAM superfamily. Lipoyl synthase family. [4Fe-4S] cluster is required as a cofactor.

It localises to the cytoplasm. The enzyme catalyses [[Fe-S] cluster scaffold protein carrying a second [4Fe-4S](2+) cluster] + N(6)-octanoyl-L-lysyl-[protein] + 2 oxidized [2Fe-2S]-[ferredoxin] + 2 S-adenosyl-L-methionine + 4 H(+) = [[Fe-S] cluster scaffold protein] + N(6)-[(R)-dihydrolipoyl]-L-lysyl-[protein] + 4 Fe(3+) + 2 hydrogen sulfide + 2 5'-deoxyadenosine + 2 L-methionine + 2 reduced [2Fe-2S]-[ferredoxin]. Its pathway is protein modification; protein lipoylation via endogenous pathway; protein N(6)-(lipoyl)lysine from octanoyl-[acyl-carrier-protein]: step 2/2. In terms of biological role, catalyzes the radical-mediated insertion of two sulfur atoms into the C-6 and C-8 positions of the octanoyl moiety bound to the lipoyl domains of lipoate-dependent enzymes, thereby converting the octanoylated domains into lipoylated derivatives. The polypeptide is Lipoyl synthase (Pseudoalteromonas atlantica (strain T6c / ATCC BAA-1087)).